An 85-amino-acid chain; its full sequence is Growth factor (85 aa).

The N-terminal stretch at 1–19 (MVPRDLVATLLCAMCIVQA) is a signal peptide. The EGF-like domain maps to 33-77 (RIKLCNDDYKNYCLNNGTCFTVALNNVSLNPFCACHINYVGSRCQ). Intrachain disulfides connect Cys37-Cys51, Cys45-Cys65, and Cys67-Cys76. Asn48 and Asn58 each carry an N-linked (GlcNAc...) asparagine; by host glycan.

The protein localises to the secreted. In terms of biological role, stimulates the growth of some tissues. The polypeptide is Growth factor (MGF) (Oryctolagus cuniculus (Rabbit)).